Here is a 656-residue protein sequence, read N- to C-terminus: MSITKTYNGDPTSLVPTQSVKESLRLIEDLKFFLATAPANWQENQVIRRYYLNHDEGFVSCVYWNNLYFITGTDIVRCIVYKFEHFGRKIIDRKKFEEGIFSDLRNLKCGADAILEPPRSEFLEFLFKNSCLRTQKKQKVFFWFNVPHDKLMADALERDLKKEKMGQRPTTMAHREPALSFHYDESSSLYTQLGKHMETQKRINDAATSSTSNTATTLTDTGVSSGLNNTTSGGGSDSATSTHNNNEASTKPSNGSEKSSPEYTTTARGRDEFGFLNEATPSQYKANSDYEDDFPLDYINQTTQNSEDYITLDANYQAGSYANMIEDNYDSFLDATLFIPPSLGVPTGTAATATTSNQVAFNDEYLIEQAQPIRTPLPPISSSTISGLLQPKSAAKFFSLQSANGGEEFFPAYQNDPSTANAGFVPPISAKYATQFATRQVATPTYIKAIPQTGAAAATGNGGQPQQYYDQATGNAFYPAEIPVSYNVVHPESEYWTNNSGAVATTAAATAPMYDASGFPIPINQSYMVMNEHEMVPYQYMNSNGAMIGMIPPHQQQQQQQQQIAMGYQSMLRQQQQQQQQQQQQQPSSTMTKKKKQIHSFNNNKSLSSNGGGITKKSHDNNNHSKVKTSYGSLNDVVNSKVTKVINKEEVKQSQT.

The DNA-binding element occupies 44 to 154; the sequence is NQVIRRYYLN…NVPHDKLMAD (111 aa). The segment covering 205–242 has biased composition (low complexity); sequence DAATSSTSNTATTLTDTGVSSGLNNTTSGGGSDSATST. Disordered regions lie at residues 205 to 289 and 575 to 656; these read DAAT…ANSD and QQQQ…QSQT. The span at 243–267 shows a compositional bias: polar residues; the sequence is HNNNEASTKPSNGSEKSSPEYTTTA. 2 stretches are compositionally biased toward low complexity: residues 575 to 586 and 600 to 609; these read QQQQQQQQQQQQ and SFNNNKSLSS. Positions 628–642 are enriched in polar residues; the sequence is KTSYGSLNDVVNSKV. Residues 646–656 show a composition bias toward basic and acidic residues; that stretch reads INKEEVKQSQT.

The protein belongs to the STE12 transcription factor family.

The protein resides in the nucleus. Its function is as follows. Transcription factor involved in the formation of pseudohyphae and hyphae. It is likely to play a role in the developmental switch between yeast and mycelial forms. May be involved in a signal transduction system, strengthening the possibility of a sexual phase up to now undetected, and similar to that of the yeast mating pathway. The polypeptide is Transcription factor CPH1 (CPH1) (Candida albicans (strain SC5314 / ATCC MYA-2876) (Yeast)).